Consider the following 348-residue polypeptide: Guanine nucleotide-binding protein alpha-13 subunit (348 aa).

Glycine 2 carries the N-myristoyl glycine lipid modification. A lipid anchor (S-palmitoyl cysteine) is attached at cysteine 3. In terms of domain architecture, G-alpha spans 34 to 348 (SHIRLLLLGS…VFKDIAKRKK (315 aa)). The segment at 37–50 (RLLLLGSAESGKTT) is G1 motif. GTP is bound by residues 42–49 (GSAESGKT), 176–182 (IMAYVPT), 201–205 (DIGGQ), 270–273 (NEID), and alanine 326. The segment at 174-182 (DLIMAYVPT) is G2 motif. Threonine 182 is a binding site for Mg(2+). The G3 motif stretch occupies residues 197 to 206 (FQLFDIGGQK). A G4 motif region spans residues 266–273 (YLFLNEID). The interval 324-329 (CIAIDT) is G5 motif.

Belongs to the G-alpha family. In terms of assembly, g proteins are composed of 3 units; alpha, beta and gamma. The alpha chain contains the guanine nucleotide binding site.

In terms of biological role, guanine nucleotide-binding proteins (G proteins) are involved as modulators or transducers in various transmembrane signaling systems. The protein is Guanine nucleotide-binding protein alpha-13 subunit (gpa-13) of Caenorhabditis elegans.